Here is a 516-residue protein sequence, read N- to C-terminus: GMP synthase [glutamine-hydrolyzing] (516 aa).

Residues 5–199 (SIIVLDFGSQ…ARNICGVTEK (195 aa)) form the Glutamine amidotransferase type-1 domain. Catalysis depends on Cys82, which acts as the Nucleophile. Residues His173 and Glu175 contribute to the active site. The GMPS ATP-PPase domain maps to 200–391 (WKMEHFLKEQ…LGLPESMINR (192 aa)). 227–233 (SGGVDSS) provides a ligand contact to ATP.

As to quaternary structure, homodimer.

It catalyses the reaction XMP + L-glutamine + ATP + H2O = GMP + L-glutamate + AMP + diphosphate + 2 H(+). The protein operates within purine metabolism; GMP biosynthesis; GMP from XMP (L-Gln route): step 1/1. In terms of biological role, catalyzes the synthesis of GMP from XMP. In Sulfurimonas denitrificans (strain ATCC 33889 / DSM 1251) (Thiomicrospira denitrificans (strain ATCC 33889 / DSM 1251)), this protein is GMP synthase [glutamine-hydrolyzing].